We begin with the raw amino-acid sequence, 474 residues long: tRNA-2-methylthio-N(6)-dimethylallyladenosine synthase (474 aa).

Positions 3-120 (KKLHIKTWGC…LPDMIEQVRR (118 aa)) constitute an MTTase N-terminal domain. [4Fe-4S] cluster-binding residues include Cys-12, Cys-49, Cys-83, Cys-157, Cys-161, and Cys-164. Residues 143–375 (RAEGPTAFVS…QDRITQQAMR (233 aa)) enclose the Radical SAM core domain. One can recognise a TRAM domain in the interval 378 to 441 (RHMMGTVQRI…TNSLRGKFIR (64 aa)).

The protein belongs to the methylthiotransferase family. MiaB subfamily. As to quaternary structure, monomer. The cofactor is [4Fe-4S] cluster.

The protein localises to the cytoplasm. It carries out the reaction N(6)-dimethylallyladenosine(37) in tRNA + (sulfur carrier)-SH + AH2 + 2 S-adenosyl-L-methionine = 2-methylsulfanyl-N(6)-dimethylallyladenosine(37) in tRNA + (sulfur carrier)-H + 5'-deoxyadenosine + L-methionine + A + S-adenosyl-L-homocysteine + 2 H(+). Functionally, catalyzes the methylthiolation of N6-(dimethylallyl)adenosine (i(6)A), leading to the formation of 2-methylthio-N6-(dimethylallyl)adenosine (ms(2)i(6)A) at position 37 in tRNAs that read codons beginning with uridine. The chain is tRNA-2-methylthio-N(6)-dimethylallyladenosine synthase from Shewanella sp. (strain MR-4).